Reading from the N-terminus, the 472-residue chain is Inactive CLIP domain-containing serine protease A3 (472 aa).

2 helical membrane-spanning segments follow: residues 51–71 and 78–98; these read ISFV…WSSM and LPAL…HTYA. N-linked (GlcNAc...) asparagine glycans are attached at residues asparagine 122, asparagine 133, asparagine 149, and asparagine 152. The Peptidase S1 domain maps to 223–470; it reads VAAAKAPAAG…YVPWITSTVS (248 aa). Cystine bridges form between cysteine 354/cysteine 428, cysteine 386/cysteine 408, and cysteine 418/cysteine 446.

The protein belongs to the peptidase S1 family. CLIP subfamily. In terms of tissue distribution, expressed at highest levels in head and salivary gland. Expressed in ovary and carcass. Minimal expression in midgut.

The protein resides in the membrane. Probable inactive serine protease. Induces migration of cultured mouse embryonic fibroblasts. Its function is as follows. (Microbial infection) Promotes dengue virus type 2 replication in the host. This Aedes aegypti (Yellowfever mosquito) protein is Inactive CLIP domain-containing serine protease A3.